We begin with the raw amino-acid sequence, 294 residues long: MNLMEVRELAPSRGQLDVAAVQVKFDSTELLEDRISRIQDLVSGVGKADLIVLPELWLHGGFSYDSWRKNAISLESEVFTFLSEVARDKKAWFHAGSFMVTEPSSAASDMWNTSVLFDPTGSLRATYKKIHRFGFSDGEPKLIAAGDEPRVVELQTERATAITGLSTCYDLRFPELYRHISAEGTALNVIPACWPLTRIQHWQTLGRARAIENQSFVVQCNMTGVDQEVELGGHSQIVDGNGDILAQADKEEAVLRATLNFDSLNELRSSFPVLNDRRADIWAAKGKTVIASHL.

Residues 16–261 enclose the CN hydrolase domain; sequence LDVAAVQVKF…EAVLRATLNF (246 aa). The active-site Proton acceptor is the Glu-55. Catalysis depends on Lys-129, which acts as the Proton donor. The Nucleophile role is filled by Cys-168.

This sequence belongs to the carbon-nitrogen hydrolase superfamily. NIT1/NIT2 family.

It catalyses the reaction 2-oxoglutaramate + H2O = 2-oxoglutarate + NH4(+). Its pathway is alkaloid degradation; nicotine degradation. In terms of biological role, catalyzes the conversion of 2-oxoglutaramate to 2-oxoglutarate. Together with glutamate dehydrogenase, may form a physiologically relevant enzyme couple, leading to transformation of metabolically inert 2-oxoglutaramate derived from trihydroxypyridine into glutamate, a central compound of nitrogen metabolism. The sequence is that of 2-oxoglutaramate amidase from Paenarthrobacter nicotinovorans (Arthrobacter nicotinovorans).